Consider the following 354-residue polypeptide: Photosystem II protein D1 1 (354 aa).

The next 3 helical transmembrane spans lie at 29–46 (YIGW…TATT), 118–133 (HFLI…EWEL), and 142–156 (WIAV…AATA). His-118 contacts chlorophyll a. Tyr-126 is a binding site for pheophytin a. [CaMn4O5] cluster contacts are provided by Asp-170 and Glu-189. The chain crosses the membrane as a helical span at residues 197–218 (FHQLGVAGVFGGALFSAMHGSL). His-198 contacts chlorophyll a. A quinone-binding positions include His-215 and 264 to 265 (SF). Fe cation is bound at residue His-215. Fe cation is bound at residue His-272. Residues 274-288 (FLAAWPVIGIWFTAL) form a helical membrane-spanning segment. The [CaMn4O5] cluster site is built by His-332, Glu-333, Asp-342, and Ala-344. Positions 345–354 (AVEVAPAIRG) are excised as a propeptide.

It belongs to the reaction center PufL/M/PsbA/D family. As to quaternary structure, PSII is composed of 1 copy each of membrane proteins PsbA, PsbB, PsbC, PsbD, PsbE, PsbF, PsbH, PsbI, PsbJ, PsbK, PsbL, PsbM, PsbT, PsbX, PsbY, PsbZ, Psb30/Ycf12, peripheral proteins PsbO, CyanoQ (PsbQ), PsbU, PsbV and a large number of cofactors. It forms dimeric complexes. The D1/D2 heterodimer binds P680, chlorophylls that are the primary electron donor of PSII, and subsequent electron acceptors. It shares a non-heme iron and each subunit binds pheophytin, quinone, additional chlorophylls, carotenoids and lipids. D1 provides most of the ligands for the Mn4-Ca-O5 cluster of the oxygen-evolving complex (OEC). There is also a Cl(-1) ion associated with D1 and D2, which is required for oxygen evolution. The PSII complex binds additional chlorophylls, carotenoids and specific lipids. is required as a cofactor. Tyr-161 forms a radical intermediate that is referred to as redox-active TyrZ, YZ or Y-Z. In terms of processing, C-terminally processed by CtpA; processing is essential to allow assembly of the oxygen-evolving complex and thus photosynthetic growth.

It localises to the cellular thylakoid membrane. The enzyme catalyses 2 a plastoquinone + 4 hnu + 2 H2O = 2 a plastoquinol + O2. Functionally, photosystem II (PSII) is a light-driven water:plastoquinone oxidoreductase that uses light energy to abstract electrons from H(2)O, generating O(2) and a proton gradient subsequently used for ATP formation. It consists of a core antenna complex that captures photons, and an electron transfer chain that converts photonic excitation into a charge separation. The D1/D2 (PsbA/PsbD) reaction center heterodimer binds P680, the primary electron donor of PSII as well as several subsequent electron acceptors. The protein is Photosystem II protein D1 1 of Synechococcus sp. (strain JA-3-3Ab) (Cyanobacteria bacterium Yellowstone A-Prime).